The sequence spans 141 residues: Large ribosomal subunit protein uL11 (141 aa).

This sequence belongs to the universal ribosomal protein uL11 family. Part of the ribosomal stalk of the 50S ribosomal subunit. Interacts with L10 and the large rRNA to form the base of the stalk. L10 forms an elongated spine to which L12 dimers bind in a sequential fashion forming a multimeric L10(L12)X complex. In terms of processing, one or more lysine residues are methylated.

Functionally, forms part of the ribosomal stalk which helps the ribosome interact with GTP-bound translation factors. The sequence is that of Large ribosomal subunit protein uL11 from Leptospira biflexa serovar Patoc (strain Patoc 1 / Ames).